A 145-amino-acid chain; its full sequence is MVYSKTFRVEEKSITVSARGTIGVVFYRDFAYLPAVSLICFVPKEEFDIRFLFHALRAIKFKKQGSATGQLTVAQFKEYGIHVPSLKKQKEIAAILDPLYSFFTDLNEGLPAEIELRKKQLDYYQNFLFNWIQKQKELVEQASTN.

Belongs to the type-I restriction system S methylase family. The methyltransferase is composed of M and S polypeptides.

Its function is as follows. The C-terminal section of a specificity (S) subunit of a type I methyltransferase (MTase); this subunit dictates DNA sequence specificity. The single R subunit has multiple frameshifts and is probably not expressed. This is Putative type I specificity subunit S.MpnORF289P C-terminus from Mycoplasma pneumoniae (strain ATCC 29342 / M129 / Subtype 1) (Mycoplasmoides pneumoniae).